The primary structure comprises 813 residues: MGESNTAAPPSRSRSLSASIKGLFGKNSISSNEINGKKEAFVQSGTREDQRYNEEHHLKKIDTKASVPKKDTQLSPLSAPGSYLKKSTSIASSLHLNSGKQSVTSSRAQSISSDGNGFLSQESFISEEHEDDIDDTTYYDKSTRGFTNLSKEVESYSISRKNSIQQSRKASVDDNEVDKRNAHFPDSDTTIDSVLGDKNKNQKVMNQINSISNISRSGSVPANPPILSSKSRRGSNAMSIRSPSVRSTASIVSGNSNSEVITPSSKPATQNISEDGNIKKTDNTLKCVINSKHFKVYENGFHEHHLPVIDLVKGDSTDSLNSSTVSKGTEGIEINRQKSSFSLTGIFKKKNGDKMNELLDTEPFGNASSLMPTKAFCPRYKTKDGSMIEEPLEQETTHKKIPKIVNPYAAVGSEELKLITTLSDKIKKGLKNKDGQSRSGSQSGSASSSLHTSPVASSTSLSSKFHHALVTCSEKYGDPVGVIGHGTYGVVRVCSRPLLISDSAPFPSYCNDKKLFFAIKVLKPKDDEQLEKFSTRVTSEFIIGHSLSRRHKAHALQNKVCPSKRLAHKAQRKLDWECPNILRVIDLMETNNTFIEVMELCPAGDLHSLLVSRSQSGNAIGSLHPLEADCFMKQLLRGVQYMHDHGIAHCDLKPENLLFHPNGLLKICDFGTSSVFQTAWEKHVHFQNGVIGSEPYVAPEVFQLGKDYDPRLIDCWSCGIVYCTMVFGQYLWKIAIENKDSLYASFISQMKDENQFSLFEELRHVNADLNKLRKNVLYNMFQTNPEKRITVDKILHSSWMKHTRCCVSYNHSV.

Disordered stretches follow at residues 27 to 83 (NSIS…PGSY), 95 to 117 (HLNS…DGNG), 157 to 277 (SISR…EDGN), and 429 to 455 (GLKN…TSPV). Residues 35 to 72 (NGKKEAFVQSGTREDQRYNEEHHLKKIDTKASVPKKDT) show a composition bias toward basic and acidic residues. Polar residues predominate over residues 157-169 (SISRKNSIQQSRK). Basic and acidic residues predominate over residues 177–186 (VDKRNAHFPD). A compositionally biased stretch (low complexity) spans 206–219 (NQINSISNISRSGS). Residues 226–274 (ILSSKSRRGSNAMSIRSPSVRSTASIVSGNSNSEVITPSSKPATQNISE) show a composition bias toward polar residues. Positions 437-455 (SRSGSQSGSASSSLHTSPV) are enriched in low complexity. Residues 477–800 (GDPVGVIGHG…VDKILHSSWM (324 aa)) enclose the Protein kinase domain. Residues 483–491 (IGHGTYGVV) and Lys520 each bind ATP. The Proton acceptor role is filled by Asp651.

This sequence belongs to the protein kinase superfamily. CAMK Ser/Thr protein kinase family. NPR/HAL subfamily. HAL5 sub-subfamily.

The catalysed reaction is L-seryl-[protein] + ATP = O-phospho-L-seryl-[protein] + ADP + H(+). It carries out the reaction L-threonyl-[protein] + ATP = O-phospho-L-threonyl-[protein] + ADP + H(+). In terms of biological role, protein kinase involved in salt tolerance and pH sensitivity, probably by regulating plasma membrane potential and cation influx. Positively controls the TRK1 potassium transport system in response to potassium starvation. Stabilizes plasma membrane nutrient transporters in the plasma membrane by preventing their vacuolar sorting and degradation. The protein is Serine/threonine-protein kinase HAL5 (HAL5) of Candida glabrata (strain ATCC 2001 / BCRC 20586 / JCM 3761 / NBRC 0622 / NRRL Y-65 / CBS 138) (Yeast).